The following is a 549-amino-acid chain: Oxygen-dependent choline dehydrogenase (549 aa).

4–33 serves as a coordination point for FAD; it reads DFVIIGSGSAGSALAYRLSEDGKNSVLVIE. His465 (proton acceptor) is an active-site residue. Residues 530 to 549 are disordered; sequence PLARSNQEPWINPRAAVSDR.

The protein belongs to the GMC oxidoreductase family. It depends on FAD as a cofactor.

The enzyme catalyses choline + A = betaine aldehyde + AH2. It catalyses the reaction betaine aldehyde + NAD(+) + H2O = glycine betaine + NADH + 2 H(+). The protein operates within amine and polyamine biosynthesis; betaine biosynthesis via choline pathway; betaine aldehyde from choline (cytochrome c reductase route): step 1/1. Functionally, involved in the biosynthesis of the osmoprotectant glycine betaine. Catalyzes the oxidation of choline to betaine aldehyde and betaine aldehyde to glycine betaine at the same rate. This chain is Oxygen-dependent choline dehydrogenase, found in Rhizobium etli (strain ATCC 51251 / DSM 11541 / JCM 21823 / NBRC 15573 / CFN 42).